We begin with the raw amino-acid sequence, 316 residues long: Probable cell division protein WhiA (316 aa).

The H-T-H motif DNA-binding region spans 280-313 (SLKELGEMLEPPVGKSGVNHRLRKIEKIAEELRT).

It belongs to the WhiA family.

Functionally, involved in cell division and chromosome segregation. The chain is Probable cell division protein WhiA from Clostridium perfringens (strain ATCC 13124 / DSM 756 / JCM 1290 / NCIMB 6125 / NCTC 8237 / Type A).